We begin with the raw amino-acid sequence, 431 residues long: CinA-like protein (431 aa).

It belongs to the CinA family.

The sequence is that of CinA-like protein from Chlorobium luteolum (strain DSM 273 / BCRC 81028 / 2530) (Pelodictyon luteolum).